Reading from the N-terminus, the 381-residue chain is Nitric oxide reductase FlRd-NAD(+) reductase (381 aa).

It belongs to the FAD-dependent oxidoreductase family. FAD serves as cofactor.

It localises to the cytoplasm. The enzyme catalyses 2 reduced [nitric oxide reductase rubredoxin domain] + NAD(+) + H(+) = 2 oxidized [nitric oxide reductase rubredoxin domain] + NADH. It functions in the pathway nitrogen metabolism; nitric oxide reduction. In terms of biological role, one of at least two accessory proteins for anaerobic nitric oxide (NO) reductase. Reduces the rubredoxin moiety of NO reductase. The protein is Nitric oxide reductase FlRd-NAD(+) reductase of Aliivibrio fischeri (strain ATCC 700601 / ES114) (Vibrio fischeri).